The chain runs to 113 residues: Dolichyl-diphosphooligosaccharide--protein glycosyltransferase subunit DAD1 (113 aa).

N-acetylserine is present on Ser-2. Residues 2–30 lie on the Cytoplasmic side of the membrane; the sequence is SASVLSVISRFLEEYLSATPQRLKLLDAY. Residues 31–51 traverse the membrane as a helical segment; it reads LLYILLTGALQFGYCLLVGTF. Position 52 (Pro-52) is a topological domain, lumenal. The chain crosses the membrane as a helical span at residues 53 to 73; it reads FNSFLSGFISCVGSFILAVCL. Residues 74 to 92 lie on the Cytoplasmic side of the membrane; the sequence is RIQINPQNKADFQGISPER. The chain crosses the membrane as a helical span at residues 93–113; that stretch reads AFADFLFASTILHLVVMNFVG.

This sequence belongs to the DAD/OST2 family. In terms of assembly, component of the oligosaccharyltransferase (OST) complex. OST exists in two different complex forms which contain common core subunits RPN1, RPN2, OST48, OST4, DAD1 and TMEM258, either STT3A or STT3B as catalytic subunits, and form-specific accessory subunits. STT3A complex assembly occurs through the formation of 3 subcomplexes. Subcomplex 1 contains RPN1 and TMEM258, subcomplex 2 contains the STT3A-specific subunits STT3A, DC2/OSTC, and KCP2 as well as the core subunit OST4, and subcomplex 3 contains RPN2, DAD1, and OST48. The STT3A complex can form stable complexes with the Sec61 complex or with both the Sec61 and TRAP complexes.

Its subcellular location is the endoplasmic reticulum membrane. It participates in protein modification; protein glycosylation. Its function is as follows. Subunit of the oligosaccharyl transferase (OST) complex that catalyzes the initial transfer of a defined glycan (Glc(3)Man(9)GlcNAc(2) in eukaryotes) from the lipid carrier dolichol-pyrophosphate to an asparagine residue within an Asn-X-Ser/Thr consensus motif in nascent polypeptide chains, the first step in protein N-glycosylation. N-glycosylation occurs cotranslationally and the complex associates with the Sec61 complex at the channel-forming translocon complex that mediates protein translocation across the endoplasmic reticulum (ER). All subunits are required for a maximal enzyme activity. The sequence is that of Dolichyl-diphosphooligosaccharide--protein glycosyltransferase subunit DAD1 from Bos taurus (Bovine).